Reading from the N-terminus, the 350-residue chain is Iron-regulated surface determinant protein A (350 aa).

Positions 1 to 46 are cleaved as a signal peptide; the sequence is MTKHYLNSKYQSEQRSSAMKKITMGTASIILGSLVYIGADSQQVNA. In terms of domain architecture, NEAT spans 62-184; it reads SQATSQPINF…EFEKAIPTLA (123 aa). Heme contacts are provided by Lys75, Ser82, and Tyr166. Positions 188-314 are disordered; sequence KPNNVKPVQP…KQASKAKELP (127 aa). Low complexity predominate over residues 203 to 214; sequence KTPTEQTKPVQP. Composition is skewed to polar residues over residues 252 to 268 and 278 to 296; these read AHTV…NKVQ and KSES…QTNK. Over residues 299–314 the composition is skewed to basic and acidic residues; sequence KHNETPKQASKAKELP. An LPXTG sorting signal motif is present at residues 313–317; sequence LPKTG. Position 316 is a pentaglycyl murein peptidoglycan amidated threonine (Thr316). Positions 317-350 are cleaved as a propeptide — removed by sortase A; it reads GLTSVDNFISTVAFATLALLGSLSLLLFKRKESK.

The protein belongs to the IsdA family. Monomer. Interacts with IsdC. Interacts with IsdB.

Its subcellular location is the secreted. It localises to the cell wall. Cell wall-anchored surface receptor that participates in the extraction of heme from oxidized methemoglobin/metHb to enable growth on hemoglobin as a sole iron source. Receives heme from IsdB and transfers it to IsdC. Also plays a role in the inhibition of host immune response. Protects S.aureus against the bactericidal protease activity of apolactoferrin. Decreases bacterial cellular hydrophobicity, which renders S.aureus resistant to bactericidal human skin fatty acids as well as to beta-defensins and cathelicidin. Also binds fibronectin and chains B-beta and gamma of fibrinogen, promoting clumping of S.aureus with fibrinogen. Involved in adherence of S.aureus to human desquamated nasal epithelial cells and is required for nasal colonization. In Staphylococcus aureus (strain Mu3 / ATCC 700698), this protein is Iron-regulated surface determinant protein A (isdA).